A 107-amino-acid chain; its full sequence is Late histone H2B.L4 (107 aa).

An O-linked (GlcNAc) serine glycan is attached at Ser-94. Residue Lys-102 forms a Glycyl lysine isopeptide (Lys-Gly) (interchain with G-Cter in ubiquitin) linkage.

The protein belongs to the histone H2B family. As to quaternary structure, the nucleosome is a histone octamer containing two molecules each of H2A, H2B, H3 and H4 assembled in one H3-H4 heterotetramer and two H2A-H2B heterodimers. The octamer wraps approximately 147 bp of DNA. Monoubiquitination gives a specific tag for epigenetic transcriptional activation and is also prerequisite for histone H3 'Lys-4' and 'Lys-79' methylation. Post-translationally, glcNAcylation at Ser-94 promotes monoubiquitination of Lys-102. It fluctuates in response to extracellular glucose, and associates with transcribed genes.

The protein resides in the nucleus. Its subcellular location is the chromosome. Core component of nucleosome. Nucleosomes wrap and compact DNA into chromatin, limiting DNA accessibility to the cellular machineries which require DNA as a template. Histones thereby play a central role in transcription regulation, DNA repair, DNA replication and chromosomal stability. DNA accessibility is regulated via a complex set of post-translational modifications of histones, also called histone code, and nucleosome remodeling. In Strongylocentrotus purpuratus (Purple sea urchin), this protein is Late histone H2B.L4.